The primary structure comprises 437 residues: Integrase (437 aa).

Residues 73–158 (WTVERWLTHW…TARTAFGEAY (86 aa)) form the Core-binding (CB) domain. The 250-residue stretch at 179-428 (EEVEPLEVED…DSVRNDVADR (250 aa)) folds into the Tyr recombinase domain. Active-site residues include Arg-214, Lys-245, His-379, Arg-382, and Trp-405. Residue Tyr-414 is the O-(3'-phospho-DNA)-tyrosine intermediate of the active site.

It belongs to the 'phage' integrase family.

Is a recombinase (or integrase), catalyzing the cutting and rejoining of the recombining DNA molecules. The polypeptide is Integrase (int) (Saccharopolyspora erythraea (Streptomyces erythraeus)).